A 324-amino-acid polypeptide reads, in one-letter code: Delta-aminolevulinic acid dehydratase (324 aa).

Residues C120, C122, and C130 each contribute to the Zn(2+) site. Catalysis depends on K195, which acts as the Schiff-base intermediate with substrate. R205 and R217 together coordinate 5-aminolevulinate. Position 233 (E233) interacts with Mg(2+). Residue K248 is the Schiff-base intermediate with substrate of the active site. 5-aminolevulinate-binding residues include S274 and Y313.

Belongs to the ALAD family. In terms of assembly, homooctamer. Zn(2+) serves as cofactor.

It carries out the reaction 2 5-aminolevulinate = porphobilinogen + 2 H2O + H(+). It functions in the pathway porphyrin-containing compound metabolism; protoporphyrin-IX biosynthesis; coproporphyrinogen-III from 5-aminolevulinate: step 1/4. Functionally, catalyzes an early step in the biosynthesis of tetrapyrroles. Binds two molecules of 5-aminolevulinate per subunit, each at a distinct site, and catalyzes their condensation to form porphobilinogen. The protein is Delta-aminolevulinic acid dehydratase (hemB) of Bacillus subtilis (strain 168).